The following is a 167-amino-acid chain: Multifunctional Ser/Thr-tRNA deacylase ProXp-y (167 aa).

It localises to the cytoplasm. The enzyme catalyses L-seryl-tRNA(Lys) + H2O = tRNA(Lys) + L-serine. The catalysed reaction is L-threonyl-tRNA(Lys) + H2O = tRNA(Lys) + L-threonine. It carries out the reaction L-homoseryl-tRNA(Lys) + H2O = tRNA(Lys) + L-homoserine + H(+). It catalyses the reaction L-seryl-tRNA(Ala) + H2O = tRNA(Ala) + L-serine. The enzyme catalyses L-homoseryl-tRNA(Ser) + H2O = tRNA(Ser) + L-homoserine + H(+). The catalysed reaction is L-seryl-tRNA(Thr) + H2O = tRNA(Thr) + L-serine. It carries out the reaction L-threonyl-tRNA(Ile) + H2O = tRNA(Ile) + L-threonine. It catalyses the reaction L-threonyl-tRNA(Val) + H2O = tRNA(Val) + L-threonine. The enzyme catalyses L-threonyl-tRNA(Ser) + H2O = tRNA(Ser) + L-threonine. An aminoacyl-tRNA editing enzyme that deacylates Ser-tRNA and/or Thr-tRNA mischarged by lysyl-tRNA synthetase (LysRS), threonyl-tRNA synthetase (ThrRS), seryl-tRNA synthetase (SerRS), alanyl-tRNA synthetase (AlaRS), valyl-tRNA synthetase (ValRS) and isoleucyl-tRNA synthetase (IleRS) in vitro. Also deacylates mischarged Hse-tRNA(Lys) and Hse-tRNA(Ser), and cognate Ser-tRNA(Ser) and Thr-tRNA(Thr) in vitro. The presence of cognate ThrRS abolishes the Thr-tRNA(Thr) deacylase activity, hence this activity is not applicable physiologically. Not able to remove the amino acid moiety from cognate Val-tRNA(Val), Ile-tRNA(Ile), Lys-tRNA(Lys), Ala-tRNA(Ala) or Pro-tRNA(Pro), or from incorrectly charged Ala-tRNA(Pro), Cys-tRNA(Pro) or Leu-tRNA(Pro) in vitro. May be required in vivo to prevent mistranslation and to maintain growth when the error prone stress-inducible lysyl-tRNA synthetase (LysU) is expressed under environmental pressure. The polypeptide is Multifunctional Ser/Thr-tRNA deacylase ProXp-y (Escherichia coli O157:H7).